The primary structure comprises 118 residues: Fluoride-specific ion channel FluC 2 (118 aa).

4 consecutive transmembrane segments (helical) span residues 1 to 21 (MIEALLVATGGFFGAITRFAI), 33 to 53 (FPIATFLINITGAFLLGYIIG), 55 to 75 (GVTTGWQLLLGTGFMGAFTTF), and 93 to 113 (TFLLYLSATYIVGILFAFLGM). Na(+) contacts are provided by Gly-70 and Thr-73.

This sequence belongs to the fluoride channel Fluc/FEX (TC 1.A.43) family.

The protein localises to the cell membrane. It catalyses the reaction fluoride(in) = fluoride(out). Its activity is regulated as follows. Na(+) is not transported, but it plays an essential structural role and its presence is essential for fluoride channel function. Functionally, fluoride-specific ion channel. Important for reducing fluoride concentration in the cell, thus reducing its toxicity. In Bacillus cereus (strain ZK / E33L), this protein is Fluoride-specific ion channel FluC 2.